The sequence spans 2157 residues: Mediator of RNA polymerase II transcription subunit 12-like protein (2157 aa).

The segment at 1–31 (MAAFGLLSYEQRPLKRPRLGPPDVYPQDPKQ) is disordered. The residue at position 462 (threonine 462) is a Phosphothreonine. A compositionally biased stretch (basic and acidic residues) spans 1437–1456 (ELEKGQHLGSSSKKERDRQK). 3 disordered regions span residues 1437 to 1461 (ELEKGQHLGSSSKKERDRQKQKSMS), 1724 to 1807 (RSYY…SQMT), and 2040 to 2157 (IDAV…PSHF). The segment covering 1771 to 1780 (TKGRKRKTKS) has biased composition (basic residues). 3 stretches are compositionally biased toward low complexity: residues 2063–2076 (PRQQQVRQQQRLLQ), 2083–2101 (QQPQQAPQPQQPSQTQSQA), and 2116–2136 (RQGLQQTQQQQQTAALVRQLQ). Polar residues predominate over residues 2137-2148 (KQLSSNQPQQGV).

The protein belongs to the Mediator complex subunit 12 family. As to quaternary structure, may be a component of the Mediator complex, which is known to be composed of MED1, MED4, MED6, MED7, MED8, MED9, MED10, MED11, MED12, MED13, MED13L, MED14, MED15, MED16, MED17, MED18, MED19, MED20, MED21, MED22, MED23, MED24, MED25, MED26, MED27, MED29, MED30, MED31, CCNC, CDK8 and CDC2L6/CDK11. The MED12, MED13, CCNC and CDK8 subunits form a distinct module termed the CDK8 module. Mediator containing the CDK8 module is less active than Mediator lacking this module in supporting transcriptional activation. Individual preparations of the Mediator complex lacking one or more distinct subunits have been variously termed ARC, CRSP, DRIP, PC2, SMCC and TRAP.

Its subcellular location is the nucleus. May be a component of the Mediator complex, a coactivator involved in the regulated transcription of nearly all RNA polymerase II-dependent genes. Mediator functions as a bridge to convey information from gene-specific regulatory proteins to the basal RNA polymerase II transcription machinery. Mediator is recruited to promoters by direct interactions with regulatory proteins and serves as a scaffold for the assembly of a functional preinitiation complex with RNA polymerase II and the general transcription factors. The protein is Mediator of RNA polymerase II transcription subunit 12-like protein (Med12l) of Mus musculus (Mouse).